A 108-amino-acid polypeptide reads, in one-letter code: Ribonuclease P protein component (108 aa).

Belongs to the RnpA family. As to quaternary structure, consists of a catalytic RNA component (M1 or rnpB) and a protein subunit.

It catalyses the reaction Endonucleolytic cleavage of RNA, removing 5'-extranucleotides from tRNA precursor.. RNaseP catalyzes the removal of the 5'-leader sequence from pre-tRNA to produce the mature 5'-terminus. It can also cleave other RNA substrates such as 4.5S RNA. The protein component plays an auxiliary but essential role in vivo by binding to the 5'-leader sequence and broadening the substrate specificity of the ribozyme. This is Ribonuclease P protein component from Campylobacter jejuni subsp. doylei (strain ATCC BAA-1458 / RM4099 / 269.97).